The chain runs to 608 residues: 1-deoxy-D-xylulose-5-phosphate synthase (608 aa).

Thiamine diphosphate-binding positions include His-66 and 107-109 (GHA). Asp-138 provides a ligand contact to Mg(2+). Residues 139-140 (GA), Asn-167, Phe-277, and Glu-350 contribute to the thiamine diphosphate site. Asn-167 provides a ligand contact to Mg(2+).

The protein belongs to the transketolase family. DXPS subfamily. As to quaternary structure, homodimer. Mg(2+) serves as cofactor. Thiamine diphosphate is required as a cofactor.

The enzyme catalyses D-glyceraldehyde 3-phosphate + pyruvate + H(+) = 1-deoxy-D-xylulose 5-phosphate + CO2. It functions in the pathway metabolic intermediate biosynthesis; 1-deoxy-D-xylulose 5-phosphate biosynthesis; 1-deoxy-D-xylulose 5-phosphate from D-glyceraldehyde 3-phosphate and pyruvate: step 1/1. Its function is as follows. Catalyzes the acyloin condensation reaction between C atoms 2 and 3 of pyruvate and glyceraldehyde 3-phosphate to yield 1-deoxy-D-xylulose-5-phosphate (DXP). The chain is 1-deoxy-D-xylulose-5-phosphate synthase from Thermotoga maritima (strain ATCC 43589 / DSM 3109 / JCM 10099 / NBRC 100826 / MSB8).